Here is a 205-residue protein sequence, read N- to C-terminus: NADH-quinone oxidoreductase subunit J (205 aa).

The next 5 helical transmembrane spans lie at 1–21 (MPIF…CVVL), 26–46 (VYSV…MILL), 54–74 (LLIV…IMML), 89–109 (LSLS…TVIL), and 142–162 (FMLP…SCIT).

Belongs to the complex I subunit 6 family.

The protein localises to the cell membrane. The catalysed reaction is a quinone + NADH + 5 H(+)(in) = a quinol + NAD(+) + 4 H(+)(out). NDH-1 shuttles electrons from NADH, via FMN and iron-sulfur (Fe-S) centers, to quinones in the respiratory chain. Couples the redox reaction to proton translocation (for every two electrons transferred, four hydrogen ions are translocated across the cytoplasmic membrane), and thus conserves the redox energy in a proton gradient. This chain is NADH-quinone oxidoreductase subunit J (nuoJ), found in Rickettsia typhi (strain ATCC VR-144 / Wilmington).